The following is a 478-amino-acid chain: Growth/differentiation factor 10 (478 aa).

Positions 1–33 are cleaved as a signal peptide; the sequence is MAHVPARTSPGPGPQLLLLLLPLFLLLLRDVAG. A propeptide spanning residues 34–368 is cleaved from the precursor; it reads SHRAPAWSAL…EKTMQKARRK (335 aa). N-linked (GlcNAc...) asparagine glycans are attached at residues N118, N156, and N281. Residues 266–319 are disordered; the sequence is YDPFPAGDPEPRAAPNNSADPRVRRAAQATGPLQDNELPGLDERPPRAHAQHFH. Intrachain disulfides connect C376/C443, C405/C475, and C409/C477. A glycan (N-linked (GlcNAc...) asparagine) is linked at N469.

It belongs to the TGF-beta family. In terms of assembly, homodimer or heterodimer. Can form a non-covalent complex of the mature region and the pro-region. As to expression, expressed in femur, brain, lung, skeletal muscle, pancreas and testis.

It localises to the secreted. In terms of biological role, growth factor involved in osteogenesis and adipogenesis. Plays an inhibitory role in the process of osteoblast differentiation via SMAD2/3 pathway. Plays an inhibitory role in the process of adipogenesis. In Homo sapiens (Human), this protein is Growth/differentiation factor 10.